A 554-amino-acid chain; its full sequence is Glucose-6-phosphate isomerase (554 aa).

Glutamate 359 functions as the Proton donor in the catalytic mechanism. Residues histidine 390 and lysine 518 contribute to the active site.

This sequence belongs to the GPI family.

It is found in the cytoplasm. The catalysed reaction is alpha-D-glucose 6-phosphate = beta-D-fructose 6-phosphate. It participates in carbohydrate biosynthesis; gluconeogenesis. The protein operates within carbohydrate degradation; glycolysis; D-glyceraldehyde 3-phosphate and glycerone phosphate from D-glucose: step 2/4. Functionally, catalyzes the reversible isomerization of glucose-6-phosphate to fructose-6-phosphate. The sequence is that of Glucose-6-phosphate isomerase from Pseudomonas fluorescens (strain ATCC BAA-477 / NRRL B-23932 / Pf-5).